Consider the following 202-residue polypeptide: GTP cyclohydrolase 1 (202 aa).

Positions 90, 93, and 163 each coordinate Zn(2+).

This sequence belongs to the GTP cyclohydrolase I family. As to quaternary structure, toroid-shaped homodecamer, composed of two pentamers of five dimers.

It carries out the reaction GTP + H2O = 7,8-dihydroneopterin 3'-triphosphate + formate + H(+). It participates in cofactor biosynthesis; 7,8-dihydroneopterin triphosphate biosynthesis; 7,8-dihydroneopterin triphosphate from GTP: step 1/1. This is GTP cyclohydrolase 1 from Mycolicibacterium vanbaalenii (strain DSM 7251 / JCM 13017 / BCRC 16820 / KCTC 9966 / NRRL B-24157 / PYR-1) (Mycobacterium vanbaalenii).